Consider the following 341-residue polypeptide: UDP-3-O-acylglucosamine N-acyltransferase (341 aa).

Catalysis depends on His-239, which acts as the Proton acceptor.

It belongs to the transferase hexapeptide repeat family. LpxD subfamily. Homotrimer.

It catalyses the reaction a UDP-3-O-[(3R)-3-hydroxyacyl]-alpha-D-glucosamine + a (3R)-hydroxyacyl-[ACP] = a UDP-2-N,3-O-bis[(3R)-3-hydroxyacyl]-alpha-D-glucosamine + holo-[ACP] + H(+). It participates in bacterial outer membrane biogenesis; LPS lipid A biosynthesis. Catalyzes the N-acylation of UDP-3-O-acylglucosamine using 3-hydroxyacyl-ACP as the acyl donor. Is involved in the biosynthesis of lipid A, a phosphorylated glycolipid that anchors the lipopolysaccharide to the outer membrane of the cell. The sequence is that of UDP-3-O-acylglucosamine N-acyltransferase from Idiomarina loihiensis (strain ATCC BAA-735 / DSM 15497 / L2-TR).